Here is an 864-residue protein sequence, read N- to C-terminus: Alanine--tRNA ligase (864 aa).

H534, H538, C639, and H643 together coordinate Zn(2+).

It belongs to the class-II aminoacyl-tRNA synthetase family. Zn(2+) serves as cofactor.

It is found in the cytoplasm. The catalysed reaction is tRNA(Ala) + L-alanine + ATP = L-alanyl-tRNA(Ala) + AMP + diphosphate. Functionally, catalyzes the attachment of alanine to tRNA(Ala) in a two-step reaction: alanine is first activated by ATP to form Ala-AMP and then transferred to the acceptor end of tRNA(Ala). Also edits incorrectly charged Ser-tRNA(Ala) and Gly-tRNA(Ala) via its editing domain. This Aster yellows witches'-broom phytoplasma (strain AYWB) protein is Alanine--tRNA ligase.